Reading from the N-terminus, the 584-residue chain is MLQYNKNHSSTWQTFRRLWPIIFPFRVGLVVASITLILNATSDALMLALLKPLLDDGFGKANRDVFVWMPLALVGLMGIRGFSGFASTYCISWVSGKVVMQMRRALFKHIMNMPVSFFVKQSTGTLVSRITYDSDQVASSSSGALVTVIREGASIIGLCIMMFYYSWQLSLILVLIAPIVSITIKLVSHRFRTISKKMQSAMGQLTSSAEQMLQGHKEVLIFGGQHTEKDRFNCVSNRMRQQSMKMVQTSSIFDPLIQCVASLALAFVLYAASIPSVMEMLTAGTITVIFSSMIVLMKPLKSLTNVSAQFQRGMAACQTLFSILDLETEKDQGILDITRVQGHIIFDDVTFFYPEKNTPSLYKINFSIESGKTVALVGRSGSGKSTIVNLLTRFYDIDKGRILLDGFNLNDYKLASLRNQIAMVSQNVHLFNDTIANNIAYARRNFYSRESIETAARMACAMDFISQMKNGLDTIIGENGILLSSGQRQRIAIARALLRDCPILIFDEATSALDSASEHIIHKSLDTLKKNRTSLIIAHRLSTVENADEILVIENGYIMERGVHKVLIRRQGIYAQLYKLQFSS.

A run of 5 helical transmembrane segments spans residues Leu-18–Leu-38, Val-65–Phe-85, Ile-155–Leu-175, Ile-252–Ala-272, and Val-277–Met-297. The ABC transmembrane type-1 domain occupies Val-30 to Arg-312. Positions Ile-344–Leu-580 constitute an ABC transporter domain. ATP is bound at residue Gly-378–Ser-385.

The protein belongs to the ABC transporter superfamily. Lipid exporter (TC 3.A.1.106) family. In terms of assembly, homodimer.

It localises to the cell inner membrane. The catalysed reaction is ATP + H2O + lipid A-core oligosaccharideSide 1 = ADP + phosphate + lipid A-core oligosaccharideSide 2.. In terms of biological role, involved in lipopolysaccharide (LPS) biosynthesis. Translocates lipid A-core from the inner to the outer leaflet of the inner membrane. Transmembrane domains (TMD) form a pore in the inner membrane and the ATP-binding domain (NBD) is responsible for energy generation. The polypeptide is ATP-dependent lipid A-core flippase (Blochmanniella pennsylvanica (strain BPEN)).